Reading from the N-terminus, the 37-residue chain is Large ribosomal subunit protein bL36c (37 aa).

This sequence belongs to the bacterial ribosomal protein bL36 family.

The protein localises to the plastid. It is found in the organellar chromatophore. The protein is Large ribosomal subunit protein bL36c of Paulinella chromatophora.